The chain runs to 269 residues: uncharacterized protein (269 aa).

Residues 1-21 form a disordered region; it reads MAYSSSNSDIEDDSSKSNSNL.

This is an uncharacterized protein from Homo sapiens (Human).